The primary structure comprises 659 residues: Anoctamin-10 (659 aa).

Residues 1–207 (MRVTLSTLDT…DSIRSYFGET (207 aa)) are Cytoplasmic-facing. Residues 208-228 (IALYFGFLEYFTFALIPMAII) traverse the membrane as a helical segment. Topologically, residues 229–240 (GLPYYLFVWEDY) are extracellular. The chain crosses the membrane as a helical span at residues 241–261 (DKYVIFASFNLIWSTVILEVW). Over 262-316 (KRGCANMTYRWGTLVMKRQFEEPRPGFHGVLGINSVTGREEPLYSSYKRQLRIYL) the chain is Cytoplasmic. A helical membrane pass occupies residues 317–337 (VSLPFVCLCLYFSLYVMMIYF). The Extracellular portion of the chain corresponds to 338–352 (DMEDWALSLHEDSGS). The chain crosses the membrane as a helical span at residues 353–373 (EWTSLLLYVPSIVYAVVIEIM). Topologically, residues 374-400 (NRLYRYAAEFLTSWENHRLESAYQNHL) are cytoplasmic. The chain crosses the membrane as a helical span at residues 401–421 (VLKVLVFNFLNCFASLFYIAF). The Extracellular portion of the chain corresponds to 422-500 (VLKDMKLLRQ…YLGTFDDYLE (79 aa)). The chain crosses the membrane as a helical span at residues 501-521 (LFLQFGYVSLFSCVYPLAAAF). Residues 522 to 553 (AVLNNFTEVNSDALKMCRVFKRPFAEPSASIG) are Cytoplasmic-facing. Residues 554-574 (VWQLAFETMSVISVVTNCALI) traverse the membrane as a helical segment. At 575-590 (GMSPQVNAVFPESKTD) the chain is on the extracellular side. Residues 591–611 (LVLIVVAVEHALLALKFILAF) form a helical membrane-spanning segment. Over 612 to 659 (AIPDKPRHIQQKLARLEFESLEALKQQQMKLVAENLKEEYQEDGKEAT) the chain is Cytoplasmic.

The protein belongs to the anoctamin family. Predominant expression seen in epithelial tissues.

It localises to the cell membrane. Its function is as follows. Does not exhibit calcium-activated chloride channel (CaCC) activity. Can inhibit the activity of ANO1. The chain is Anoctamin-10 (Ano10) from Mus musculus (Mouse).